Consider the following 149-residue polypeptide: MRLWVDADACPNVIKTILFRAAERLEISCILVANQAISIPPSKWIERRVVSAGFDVADNYIVDNVDIQDLVITADIPLASDVIEKGALAINPRGELYTKENIKQRLGMRDFMEQMRSSGIQTGGPTVFSQQDRMAFANTLDKLLAQRMK.

This sequence belongs to the UPF0178 family.

The chain is UPF0178 protein Mmwyl1_2258 from Marinomonas sp. (strain MWYL1).